A 176-amino-acid chain; its full sequence is Inner membrane-spanning protein YciB (176 aa).

6 helical membrane-spanning segments follow: residues 3–23 (FLFDLFPIILFFAAFKVWGIF), 24–44 (TATAVAIVATLAQVAWVAFRH), 49–69 (TMLWVSLGVIVVFGGATLVLH), 81–101 (LYWLFAIGLLAARYAFGNNLI), 119–139 (LNVAWALFFAVLGVANLYVVH), and 149–169 (FKLFGTTGAMVVFIILQSLWL).

This sequence belongs to the YciB family.

Its subcellular location is the cell inner membrane. Its function is as follows. Plays a role in cell envelope biogenesis, maintenance of cell envelope integrity and membrane homeostasis. This is Inner membrane-spanning protein YciB from Burkholderia ambifaria (strain MC40-6).